A 127-amino-acid chain; its full sequence is Histidine-containing phosphotransfer protein 4 (127 aa).

The HPt domain maps to 27 to 122; sequence NPNFVEEVSA…STLRKKLEHY (96 aa). H68 carries the post-translational modification Phosphohistidine.

Interacts with the B-type response regulators ARR1 and ARR2. In terms of processing, two-component system major event consists of a His-to-Asp phosphorelay between a sensor histidine kinase (HK) and a response regulator (RR). In plants, the His-to-Asp phosphorelay involves an additional intermediate named Histidine-containing phosphotransfer protein (HPt). This multistep phosphorelay consists of a His-Asp-His-Asp sequential transfer of a phosphate group between first a His and an Asp of the HK protein, followed by the transfer to a conserved His of the HPt protein and finally the transfer to an Asp in the receiver domain of the RR protein. In terms of tissue distribution, predominantly expressed in aerial parts of the plant.

The protein resides in the cytoplasm. It is found in the cytosol. The protein localises to the nucleus. In terms of biological role, functions as a two-component phosphorelay mediator between cytokinin sensor histidine kinases and response regulators (B-type ARRs). Plays an important role in propagating cytokinin signal transduction through the multistep His-to-Asp phosphorelay. In Arabidopsis thaliana (Mouse-ear cress), this protein is Histidine-containing phosphotransfer protein 4 (AHP4).